The sequence spans 248 residues: uncharacterized protein (248 aa).

Residue 9 to 33 (IITGASSGIGEATAILLAEKGAKLV) coordinates NADP(+). Ser141 is a substrate binding site. The active-site Proton acceptor is the Tyr154.

It belongs to the short-chain dehydrogenases/reductases (SDR) family.

This is an uncharacterized protein from Listeria innocua serovar 6a (strain ATCC BAA-680 / CLIP 11262).